Reading from the N-terminus, the 277-residue chain is Shikimate dehydrogenase (NADP(+)) (277 aa).

Residues 18-20 (SKS) and Thr-65 each bind shikimate. Lys-69 acts as the Proton acceptor in catalysis. NADP(+) is bound at residue Glu-81. The shikimate site is built by Asn-90 and Asp-106. NADP(+) contacts are provided by residues 130 to 134 (GAGGA), 154 to 159 (NRTFSK), and Met-217. Tyr-219 is a binding site for shikimate. Position 241 (Gly-241) interacts with NADP(+).

Belongs to the shikimate dehydrogenase family. As to quaternary structure, homodimer.

The catalysed reaction is shikimate + NADP(+) = 3-dehydroshikimate + NADPH + H(+). It participates in metabolic intermediate biosynthesis; chorismate biosynthesis; chorismate from D-erythrose 4-phosphate and phosphoenolpyruvate: step 4/7. Its function is as follows. Involved in the biosynthesis of the chorismate, which leads to the biosynthesis of aromatic amino acids. Catalyzes the reversible NADPH linked reduction of 3-dehydroshikimate (DHSA) to yield shikimate (SA). This Vibrio campbellii (strain ATCC BAA-1116) protein is Shikimate dehydrogenase (NADP(+)).